A 75-amino-acid chain; its full sequence is M-myrmeciitoxin-Mp2a (75 aa).

Positions 1–26 (MKLSCLLLTLAIIFVLTIVHAPNVEA) are cleaved as a signal peptide. Residues 27 to 48 (KALADPESDAVGFADAVGEADP) constitute a propeptide that is removed on maturation. A Leucine amide modification is found at Leu74.

The protein belongs to the formicidae venom precursor-01 superfamily. Ant pilosulin family. As to quaternary structure, heterodimer with M-MIITX-Mp2b (pilosin-3b) (AC P0C023); disulfide-linked. Only heterodimers (and not monomers) have been identified in the venom. In terms of tissue distribution, expressed by the venom gland.

It is found in the secreted. Heterodimer protein that may serve both defensive (pain-inducing) and predatory (insecticidal) roles. Has membrane-disrupting activity and shows induction of non-specific calcium influx into cells,. Shows broad-spectrum activity against a diverse range of bacteria, and cell lines, as well as hemolytic activity (EC(50)=2.18 uM). In vivo, shows moderate insecticidal activity against D.melanogaster and potent anthelmintic activity against the veterinary nematode H.contortus. In addition, intraplantar injection into mice induces nocifensive behavior and mechanical allodynia. This is M-myrmeciitoxin-Mp2a from Myrmecia pilosula (Jack jumper ant).